The sequence spans 153 residues: Coiled-coil domain-containing protein 182 (153 aa).

The stretch at 46–109 (ADLEILQQKV…RLREEEDRGI (64 aa)) forms a coiled coil.

This is Coiled-coil domain-containing protein 182 (CCDC182) from Homo sapiens (Human).